Reading from the N-terminus, the 369-residue chain is F-box protein At3g08750 (369 aa).

In terms of domain architecture, F-box spans 6-53 (CLLLPSLPFELIEEILYKIPAESLIRFKSTCKKWYNLITEKRFMYNHL).

The protein is F-box protein At3g08750 of Arabidopsis thaliana (Mouse-ear cress).